We begin with the raw amino-acid sequence, 286 residues long: Bifunctional protein FolD (286 aa).

NADP(+) contacts are provided by residues 166-168 (GAS) and Ile232.

This sequence belongs to the tetrahydrofolate dehydrogenase/cyclohydrolase family. Homodimer.

It carries out the reaction (6R)-5,10-methylene-5,6,7,8-tetrahydrofolate + NADP(+) = (6R)-5,10-methenyltetrahydrofolate + NADPH. It catalyses the reaction (6R)-5,10-methenyltetrahydrofolate + H2O = (6R)-10-formyltetrahydrofolate + H(+). The protein operates within one-carbon metabolism; tetrahydrofolate interconversion. In terms of biological role, catalyzes the oxidation of 5,10-methylenetetrahydrofolate to 5,10-methenyltetrahydrofolate and then the hydrolysis of 5,10-methenyltetrahydrofolate to 10-formyltetrahydrofolate. In Shewanella denitrificans (strain OS217 / ATCC BAA-1090 / DSM 15013), this protein is Bifunctional protein FolD.